A 314-amino-acid polypeptide reads, in one-letter code: tRNA pseudouridine synthase B (314 aa).

Residue histidine 43 participates in substrate binding. Aspartate 48 (nucleophile) is an active-site residue. Tyrosine 76, tyrosine 179, and leucine 200 together coordinate substrate.

This sequence belongs to the pseudouridine synthase TruB family. Type 1 subfamily.

The catalysed reaction is uridine(55) in tRNA = pseudouridine(55) in tRNA. In terms of biological role, responsible for synthesis of pseudouridine from uracil-55 in the psi GC loop of transfer RNAs. This Salmonella typhi protein is tRNA pseudouridine synthase B.